The sequence spans 527 residues: Probable malate:quinone oxidoreductase (527 aa).

Belongs to the MQO family. FAD serves as cofactor.

It catalyses the reaction (S)-malate + a quinone = a quinol + oxaloacetate. Its pathway is carbohydrate metabolism; tricarboxylic acid cycle; oxaloacetate from (S)-malate (quinone route): step 1/1. This chain is Probable malate:quinone oxidoreductase, found in Pectobacterium carotovorum subsp. carotovorum (strain PC1).